Reading from the N-terminus, the 119-residue chain is NADH dehydrogenase [ubiquinone] 1 subunit C2 (119 aa).

The chain crosses the membrane as a helical span at residues 56–75 (GLHRQLLYITAFFFAGYYLV).

Belongs to the complex I NDUFC2 subunit family. In terms of assembly, complex I is composed of 45 different subunits. Interacts with TMEM242.

It is found in the mitochondrion inner membrane. In terms of biological role, accessory subunit of the mitochondrial membrane respiratory chain NADH dehydrogenase (Complex I), that is believed not to be involved in catalysis but required for the complex assembly. Complex I functions in the transfer of electrons from NADH to the respiratory chain. The immediate electron acceptor for the enzyme is believed to be ubiquinone. The sequence is that of NADH dehydrogenase [ubiquinone] 1 subunit C2 from Gorilla gorilla gorilla (Western lowland gorilla).